Consider the following 386-residue polypeptide: Probable Xaa-Pro aminopeptidase PMAA_074180 (386 aa).

Mn(2+) contacts are provided by Asp-160, Asp-171, Glu-311, and Glu-350.

This sequence belongs to the peptidase M24B family. Mn(2+) serves as cofactor.

The catalysed reaction is Release of any N-terminal amino acid, including proline, that is linked to proline, even from a dipeptide or tripeptide.. Its function is as follows. Catalyzes the removal of a penultimate prolyl residue from the N-termini of peptides. The protein is Probable Xaa-Pro aminopeptidase PMAA_074180 of Talaromyces marneffei (strain ATCC 18224 / CBS 334.59 / QM 7333) (Penicillium marneffei).